We begin with the raw amino-acid sequence, 341 residues long: Binder of USO1 and GRH1 protein 1 (341 aa).

The tract at residues 1 to 181 (MSEQESDEVK…AADDLFANDG (181 aa)) is disordered. Residue S2 is modified to N-acetylserine. Residues 2–41 (SEQESDEVKRMKQLEEARKRVEELKKKKNKKNKGKKNKNS) adopt a coiled-coil conformation. Over residues 7–26 (DEVKRMKQLEEARKRVEELK) the composition is skewed to basic and acidic residues. Positions 27-39 (KKKNKKNKGKKNK) are enriched in basic residues. The span at 69–78 (KANSTKSENN) shows a compositional bias: polar residues. Over residues 79–91 (DQNDVDEESEEKE) the composition is skewed to acidic residues. S87 bears the Phosphoserine mark. Residues 118–132 (GKDDAENTKKEEVQE) show a composition bias toward basic and acidic residues. Residues 158-171 (VQTQEGNEPSNTSE) show a composition bias toward polar residues. S170 carries the post-translational modification Phosphoserine. Residues 188–272 (LTTIKKQKEE…LKLAEAKAAR (85 aa)) are a coiled coil. At T292 the chain carries Phosphothreonine.

In terms of assembly, interacts with GRH1 (via C-terminus), probably forming a heterooligomer consisting of a GRH1 dimer and a BUG1 dimer.

The protein resides in the cytoplasm. The protein localises to the golgi apparatus. It is found in the cis-Golgi network membrane. Involved in ER to Golgi vesicle-mediated transport by either facilitating USO1-dependent and -independent tethering or increasing target accuracy of fusion events of COPII-coated vesicles. This Saccharomyces cerevisiae (strain ATCC 204508 / S288c) (Baker's yeast) protein is Binder of USO1 and GRH1 protein 1.